A 133-amino-acid polypeptide reads, in one-letter code: DNA-directed RNA polymerases I and III subunit RPAC2 (133 aa).

M1 carries the N-acetylmethionine modification. The tract at residues 1 to 22 (MEEDQELERKMSGVKTSMAEGE) is disordered.

The protein belongs to the archaeal Rpo11/eukaryotic RPB11/RPC19 RNA polymerase subunit family. As to quaternary structure, component of the RNA polymerase I and RNA polymerase III complexes consisting of at least 13 and 17 subunits, respectively. The transcriptionally active RNA polymerase III complex consists of a ten-subunit horseshoe-shaped catalytic core composed of POLR3A/RPC1, POLR3B/RPC2, POLR1C/RPAC1, POLR1D/RPAC2, POLR3K/RPC10, POLR2E/RPABC1, POLR2F/RPABC2, POLR2H/RPABC3, POLR2K/RPABC4 and POLR2L/RPABC5; a mobile stalk composed of two subunits POLR3H/RPC8 and CRCP/RPC9, protruding from the core and functioning primarily in transcription initiation; and additional subunits homologous to general transcription factors of the RNA polymerase II machinery, POLR3C/RPC3-POLR3F/RPC6-POLR3G/RPC7 heterotrimer required for transcription initiation and POLR3D/RPC4-POLR3E/RPC5 heterodimer involved in both transcription initiation and termination.

It localises to the nucleus. Functionally, DNA-dependent RNA polymerase catalyzes the transcription of DNA into RNA using the four ribonucleoside triphosphates as substrates. Common component of RNA polymerases I and III which synthesize ribosomal RNA precursor pre-rRNA and short non-coding RNAs including 5S rRNA, snRNAs, tRNAs and miRNAs, respectively. The chain is DNA-directed RNA polymerases I and III subunit RPAC2 (POLR1D) from Bos taurus (Bovine).